The following is a 496-amino-acid chain: Proline--tRNA ligase (496 aa).

It belongs to the class-II aminoacyl-tRNA synthetase family. ProS type 3 subfamily. In terms of assembly, homodimer.

The protein resides in the cytoplasm. The catalysed reaction is tRNA(Pro) + L-proline + ATP = L-prolyl-tRNA(Pro) + AMP + diphosphate. Its function is as follows. Catalyzes the attachment of proline to tRNA(Pro) in a two-step reaction: proline is first activated by ATP to form Pro-AMP and then transferred to the acceptor end of tRNA(Pro). The polypeptide is Proline--tRNA ligase (Phocaeicola vulgatus (strain ATCC 8482 / DSM 1447 / JCM 5826 / CCUG 4940 / NBRC 14291 / NCTC 11154) (Bacteroides vulgatus)).